Here is a 294-residue protein sequence, read N- to C-terminus: Flavin-dependent thymidylate synthase (294 aa).

The region spanning 27 to 250 (GFIRVIDYMG…PFTYEAFEEY (224 aa)) is the ThyX domain. FAD is bound by residues Thr73, 96–98 (RHR), and Glu104. Residues 93–96 (QWIR), 104–108 (EYSAR), and Arg189 each bind dUMP. The ThyX motif motif lies at 96-106 (RHRTASVNEYS). FAD is bound by residues 205-207 (NLH) and His211. Residue Arg216 coordinates dUMP. The Involved in ionization of N3 of dUMP, leading to its activation role is filled by Arg216.

Belongs to the thymidylate synthase ThyX family. In terms of assembly, homotetramer. FAD is required as a cofactor.

The catalysed reaction is dUMP + (6R)-5,10-methylene-5,6,7,8-tetrahydrofolate + NADPH + H(+) = dTMP + (6S)-5,6,7,8-tetrahydrofolate + NADP(+). It functions in the pathway pyrimidine metabolism; dTTP biosynthesis. Its function is as follows. Catalyzes the reductive methylation of 2'-deoxyuridine-5'-monophosphate (dUMP) to 2'-deoxythymidine-5'-monophosphate (dTMP) while utilizing 5,10-methylenetetrahydrofolate (mTHF) as the methyl donor, and NADPH and FADH(2) as the reductant. This is Flavin-dependent thymidylate synthase from Rickettsia prowazekii (strain Madrid E).